Reading from the N-terminus, the 565-residue chain is 13S globulin seed storage protein 1 (565 aa).

An N-terminal signal peptide occupies residues 1-20 (MSTKLILSFSLCLMVLSCSA). Cystine bridges form between Cys-44-Cys-77 and Cys-120-Cys-384. The Cupin type-1 1 domain maps to 49 to 331 (LTASEPSRRV…FRNVDQETIS (283 aa)). Disordered regions lie at residues 126 to 224 (SESE…IRDG), 271 to 301 (GQSKQSREDRRSQRQTREEGSDRQSRESDDD), and 356 to 376 (EYEEELQRERGDRKRGGSGRS). 3 stretches are compositionally biased toward basic and acidic residues: residues 137 to 224 (RDQR…IRDG), 275 to 297 (QSREDRRSQRQTREEGSDRQSRE), and 356 to 370 (EYEEELQRERGDRKR). In terms of domain architecture, Cupin type-1 2 spans 390–539 (QNVNRPSRAD…SYDISTKEAF (150 aa)).

It belongs to the 11S seed storage protein (globulins) family. Hexamer; each subunit is composed of an acidic and a basic chain derived from a single precursor and linked by a disulfide bond. Expressed only in immature seeds.

In terms of biological role, seed storage protein. The sequence is that of 13S globulin seed storage protein 1 (FA02) from Fagopyrum esculentum (Common buckwheat).